Here is a 485-residue protein sequence, read N- to C-terminus: Skb1 localization factor 1 (485 aa).

The sufficient for interaction with Skb1 stretch occupies residues 1–200; that stretch reads MSSIIQNPIE…VDDSDLTPHT (200 aa). 3 disordered regions span residues 117 to 230, 286 to 416, and 446 to 466; these read NAAN…MSRN, ETQH…LRRS, and TTQE…KPEK. The segment covering 171–182 has biased composition (polar residues); that stretch reads SRSSRYSKTSDL. The span at 189-198 shows a compositional bias: basic and acidic residues; it reads RFVDDSDLTP. Composition is skewed to polar residues over residues 218–230 and 341–363; these read GRSS…MSRN and VGSS…QQDS. Serine 222 carries the phosphoserine modification. Residues 371–393 show a composition bias toward basic and acidic residues; the sequence is SERSYRRVRDQYLSKPRLSDKNR. Positions 394–416 are enriched in polar residues; it reads YSTFSEFPGQGTPSASQSNLRRS. The segment covering 447 to 464 has biased composition (basic and acidic residues); the sequence is TQERKPVVKPDSIKTVKP. Residues 451-485 are required and sufficient for plasma membrane anchoring; lysine-rich, may bind to anionic lipids in the plasma membrane; the sequence is KPVVKPDSIKTVKPEKKKSKGFFKKLMHKISHIFD. Serine 458 bears the Phosphoserine mark.

In terms of assembly, interacts with Skb1.

It localises to the cell membrane. Its function is as follows. Acts as a membrane anchor for Skb1 in forming plasma membrane microdomains. Promotes mitotic entry by sequestering mitotic inhibitor Skb1 from its regulatory targets Cdr1 and Wee1. The sequence is that of Skb1 localization factor 1 from Schizosaccharomyces pombe (strain 972 / ATCC 24843) (Fission yeast).